We begin with the raw amino-acid sequence, 147 residues long: Ras-related protein RabK2 (147 aa).

Residues 11–15 and 63–66 contribute to the GTP site; these read NTHGS and TKSD. Residue Cys145 is the site of S-geranylgeranyl cysteine attachment.

It belongs to the small GTPase superfamily. Rab family.

The protein localises to the cell membrane. This chain is Ras-related protein RabK2 (rabK2), found in Dictyostelium discoideum (Social amoeba).